Consider the following 302-residue polypeptide: Ornithine carbamoyltransferase (302 aa).

Carbamoyl phosphate contacts are provided by residues 47 to 50 (STRT), Gln-74, Arg-98, and 125 to 128 (HPCQ). L-ornithine is bound by residues Asn-156, Asp-220, and 224–225 (SM). Residues 260 to 261 (CL) and Arg-288 each bind carbamoyl phosphate.

Belongs to the aspartate/ornithine carbamoyltransferase superfamily. OTCase family.

The protein localises to the cytoplasm. The catalysed reaction is carbamoyl phosphate + L-ornithine = L-citrulline + phosphate + H(+). It functions in the pathway amino-acid biosynthesis; L-arginine biosynthesis; L-arginine from L-ornithine and carbamoyl phosphate: step 1/3. Its function is as follows. Reversibly catalyzes the transfer of the carbamoyl group from carbamoyl phosphate (CP) to the N(epsilon) atom of ornithine (ORN) to produce L-citrulline. This chain is Ornithine carbamoyltransferase, found in Methanosphaera stadtmanae (strain ATCC 43021 / DSM 3091 / JCM 11832 / MCB-3).